Reading from the N-terminus, the 751-residue chain is Cytosolic neutral trehalase (751 aa).

Residues 1–15 (MDDSALPSNTSNGIN) show a composition bias toward polar residues. Disordered stretches follow at residues 1–42 (MDDS…NPES) and 64–88 (DFHE…NPRK). Over residues 64–78 (DFHEMLGDRNTRRGS) the composition is skewed to basic and acidic residues. Ca(2+) contacts are provided by Asp105, Asp107, Asn109, Gln111, and Asp116. Residues Arg292, 299–300 (WD), Asn336, 345–347 (RSQ), Glu412, Arg461, and Gly464 contribute to the substrate site. Catalysis depends on proton donor/acceptor residues Asp466 and Glu670.

This sequence belongs to the glycosyl hydrolase 37 family. It depends on Ca(2+) as a cofactor.

Its subcellular location is the cytoplasm. It catalyses the reaction alpha,alpha-trehalose + H2O = alpha-D-glucose + beta-D-glucose. The protein operates within carbohydrate degradation. With respect to regulation, activated by calcium. In terms of biological role, hydrolyzes intracellular trehalose to glucose. The disaccharide trehalose serves as a storage carbohydrate that is mobilized during conidial germination. Regulates the level of trehalose as a protectant for cell integrity during heat stress. This chain is Cytosolic neutral trehalase, found in Emericella nidulans (strain FGSC A4 / ATCC 38163 / CBS 112.46 / NRRL 194 / M139) (Aspergillus nidulans).